The sequence spans 143 residues: Large-conductance mechanosensitive channel (143 aa).

The next 2 membrane-spanning stretches (helical) occupy residues 10–30 and 89–109; these read FAVK…GAFS and GSFI…FLMV.

This sequence belongs to the MscL family. As to quaternary structure, homopentamer.

It is found in the cell inner membrane. Functionally, channel that opens in response to stretch forces in the membrane lipid bilayer. May participate in the regulation of osmotic pressure changes within the cell. The protein is Large-conductance mechanosensitive channel of Burkholderia cenocepacia (strain HI2424).